The primary structure comprises 1453 residues: Clustered mitochondria protein homolog (1453 aa).

Positions 78–101 are enriched in polar residues; it reads LSENGQENSPHNSDSGHETSSPDS. Residues 78-110 are disordered; the sequence is LSENGQENSPHNSDSGHETSSPDSPLTPIEEGA. Residues 439–690 form the Clu domain; that stretch reads EDGIRAEDCT…RTFPPDVNYL (252 aa). Residues 979-1015 form a disordered region; sequence PLTPSNEEVSMPINSVKKSRSSKRRKQISSGGKENDD. Over residues 995–1005 the composition is skewed to basic residues; the sequence is KKSRSSKRRKQ. TPR repeat units follow at residues 1235 to 1268 and 1277 to 1310; these read AEID…HQIY and ALIY…YSKT.

This sequence belongs to the CLU family.

It localises to the cytoplasm. Its function is as follows. mRNA-binding protein involved in proper cytoplasmic distribution of mitochondria. The polypeptide is Clustered mitochondria protein homolog (Brugia malayi (Filarial nematode worm)).